A 153-amino-acid chain; its full sequence is MYAIIRLKGSVNTRPEIKDTLRMLRLNQINHCVVVEENPTYKGMIQVVKDYVAFGVINADTLAMIMEHRGRLEGGDRLTNEYVAKNSSYKSIKEFAAAVAEGKAKLGDMPGLKPVFRMHPPRKGHKGLKRTYQQGGALGNYGEEIASLVEQMR.

Belongs to the universal ribosomal protein uL30 family. As to quaternary structure, part of the 50S ribosomal subunit.

The polypeptide is Large ribosomal subunit protein uL30 (Methanocella arvoryzae (strain DSM 22066 / NBRC 105507 / MRE50)).